A 375-amino-acid polypeptide reads, in one-letter code: Queuine tRNA-ribosyltransferase (375 aa).

Asp89 (proton acceptor) is an active-site residue. Substrate is bound by residues 89-93 (DSGGF), Asp143, Gln187, and Gly214. Positions 245 to 251 (GVGKPED) are RNA binding. Asp264 (nucleophile) is an active-site residue. Positions 269–273 (TRNAR) are RNA binding; important for wobble base 34 recognition. Zn(2+) is bound by residues Cys302, Cys304, Cys307, and His333.

The protein belongs to the queuine tRNA-ribosyltransferase family. As to quaternary structure, homodimer. Within each dimer, one monomer is responsible for RNA recognition and catalysis, while the other monomer binds to the replacement base PreQ1. Zn(2+) serves as cofactor.

It catalyses the reaction 7-aminomethyl-7-carbaguanine + guanosine(34) in tRNA = 7-aminomethyl-7-carbaguanosine(34) in tRNA + guanine. It functions in the pathway tRNA modification; tRNA-queuosine biosynthesis. In terms of biological role, catalyzes the base-exchange of a guanine (G) residue with the queuine precursor 7-aminomethyl-7-deazaguanine (PreQ1) at position 34 (anticodon wobble position) in tRNAs with GU(N) anticodons (tRNA-Asp, -Asn, -His and -Tyr). Catalysis occurs through a double-displacement mechanism. The nucleophile active site attacks the C1' of nucleotide 34 to detach the guanine base from the RNA, forming a covalent enzyme-RNA intermediate. The proton acceptor active site deprotonates the incoming PreQ1, allowing a nucleophilic attack on the C1' of the ribose to form the product. After dissociation, two additional enzymatic reactions on the tRNA convert PreQ1 to queuine (Q), resulting in the hypermodified nucleoside queuosine (7-(((4,5-cis-dihydroxy-2-cyclopenten-1-yl)amino)methyl)-7-deazaguanosine). This is Queuine tRNA-ribosyltransferase from Aliivibrio salmonicida (strain LFI1238) (Vibrio salmonicida (strain LFI1238)).